The following is a 423-amino-acid chain: 3-phosphoshikimate 1-carboxyvinyltransferase (423 aa).

3-phosphoshikimate is bound by residues lysine 21, serine 22, and arginine 26. Phosphoenolpyruvate is bound at residue lysine 21. Phosphoenolpyruvate-binding residues include glycine 93 and arginine 123. The 3-phosphoshikimate site is built by serine 168, serine 169, glutamine 170, serine 196, aspartate 311, and lysine 338. Glutamine 170 contributes to the phosphoenolpyruvate binding site. Aspartate 311 serves as the catalytic Proton acceptor. Positions 342, 383, and 408 each coordinate phosphoenolpyruvate.

This sequence belongs to the EPSP synthase family. As to quaternary structure, monomer.

Its subcellular location is the cytoplasm. The catalysed reaction is 3-phosphoshikimate + phosphoenolpyruvate = 5-O-(1-carboxyvinyl)-3-phosphoshikimate + phosphate. Its pathway is metabolic intermediate biosynthesis; chorismate biosynthesis. Its function is as follows. Catalyzes the transfer of the enolpyruvyl moiety of phosphoenolpyruvate (PEP) to the 5-hydroxyl of shikimate-3-phosphate (S3P) to produce enolpyruvyl shikimate-3-phosphate and inorganic phosphate. The chain is 3-phosphoshikimate 1-carboxyvinyltransferase from Methanosphaerula palustris (strain ATCC BAA-1556 / DSM 19958 / E1-9c).